The chain runs to 307 residues: 4-hydroxythreonine-4-phosphate dehydrogenase (307 aa).

Substrate contacts are provided by H121 and T122. A divalent metal cation is bound by residues H150, H189, and H246. Substrate is bound by residues K254, N263, and R272.

The protein belongs to the PdxA family. As to quaternary structure, homodimer. Requires Zn(2+) as cofactor. Mg(2+) is required as a cofactor. It depends on Co(2+) as a cofactor.

It is found in the cytoplasm. It carries out the reaction 4-(phosphooxy)-L-threonine + NAD(+) = 3-amino-2-oxopropyl phosphate + CO2 + NADH. It participates in cofactor biosynthesis; pyridoxine 5'-phosphate biosynthesis; pyridoxine 5'-phosphate from D-erythrose 4-phosphate: step 4/5. Its function is as follows. Catalyzes the NAD(P)-dependent oxidation of 4-(phosphooxy)-L-threonine (HTP) into 2-amino-3-oxo-4-(phosphooxy)butyric acid which spontaneously decarboxylates to form 3-amino-2-oxopropyl phosphate (AHAP). This chain is 4-hydroxythreonine-4-phosphate dehydrogenase, found in Campylobacter fetus subsp. fetus (strain 82-40).